An 897-amino-acid chain; its full sequence is Beta-galactosidase (897 aa).

The Proton donor role is filled by glutamate 459. Catalysis depends on glutamate 525, which acts as the Nucleophile.

Belongs to the glycosyl hydrolase 2 family.

The catalysed reaction is Hydrolysis of terminal non-reducing beta-D-galactose residues in beta-D-galactosides.. The polypeptide is Beta-galactosidase (cbgA) (Clostridium acetobutylicum).